The chain runs to 257 residues: Imidazole glycerol phosphate synthase subunit HisF (257 aa).

Residues D12 and D131 contribute to the active site.

Belongs to the HisA/HisF family. Heterodimer of HisH and HisF.

It is found in the cytoplasm. It carries out the reaction 5-[(5-phospho-1-deoxy-D-ribulos-1-ylimino)methylamino]-1-(5-phospho-beta-D-ribosyl)imidazole-4-carboxamide + L-glutamine = D-erythro-1-(imidazol-4-yl)glycerol 3-phosphate + 5-amino-1-(5-phospho-beta-D-ribosyl)imidazole-4-carboxamide + L-glutamate + H(+). It functions in the pathway amino-acid biosynthesis; L-histidine biosynthesis; L-histidine from 5-phospho-alpha-D-ribose 1-diphosphate: step 5/9. Its function is as follows. IGPS catalyzes the conversion of PRFAR and glutamine to IGP, AICAR and glutamate. The HisF subunit catalyzes the cyclization activity that produces IGP and AICAR from PRFAR using the ammonia provided by the HisH subunit. This is Imidazole glycerol phosphate synthase subunit HisF from Rhodococcus opacus (strain B4).